A 103-amino-acid chain; its full sequence is Putative glutaredoxin-C14 (103 aa).

The Glutaredoxin domain maps to 1–102 (MDRVMKLASE…PMLKNAGALW (102 aa)). Residues C21 and C24 are joined by a disulfide bond. The Responsive for interaction with TGA factors motif lies at 100–103 (ALWL).

The protein belongs to the glutaredoxin family. CC-type subfamily.

The protein resides in the cytoplasm. It is found in the nucleus. In terms of biological role, has a glutathione-disulfide oxidoreductase activity in the presence of NADPH and glutathione reductase. Reduces low molecular weight disulfides and proteins. The chain is Putative glutaredoxin-C14 (GRXC14) from Oryza sativa subsp. japonica (Rice).